Reading from the N-terminus, the 582-residue chain is Type I secretion system ATP-binding protein PrsD (582 aa).

The next 3 membrane-spanning stretches (helical) occupy residues 22–42 (FIGV…GSFF), 59–79 (LIAL…FELI), and 148–168 (IAIC…GGLI). An ABC transmembrane type-1 domain is found at 22 to 301 (FIGVGVASAL…AIGNWRGLVA (280 aa)). In terms of domain architecture, ABC transporter spans 332–568 (LTVEGLASGP…VLRPQQVERQ (237 aa)). 366–373 (GPSASGKS) lines the ATP pocket.

It belongs to the ABC transporter superfamily. Part of a type I secretion system composed of PrsD and PrsE.

The protein resides in the cell inner membrane. Its function is as follows. Mediates secretion of glycanase ExsH. This is Type I secretion system ATP-binding protein PrsD (prsD) from Rhizobium meliloti (strain 1021) (Ensifer meliloti).